Here is a 215-residue protein sequence, read N- to C-terminus: Probable phosphoglycerate mutase GpmB (215 aa).

Substrate-binding positions include 8–15, 21–22, arginine 58, arginine 60, 82–85, 104–105, and 151–152; these read RHGETQWN, QG, ELNM, RR, and GI. Residue histidine 9 is the Tele-phosphohistidine intermediate of the active site. Residue glutamate 82 is the Proton donor/acceptor of the active site.

The protein belongs to the phosphoglycerate mutase family. GpmB subfamily.

It catalyses the reaction (2R)-2-phosphoglycerate = (2R)-3-phosphoglycerate. The protein operates within carbohydrate degradation; glycolysis; pyruvate from D-glyceraldehyde 3-phosphate: step 3/5. The protein is Probable phosphoglycerate mutase GpmB of Escherichia coli O1:K1 / APEC.